The following is a 454-amino-acid chain: tRNA modification GTPase MnmE (454 aa).

(6S)-5-formyl-5,6,7,8-tetrahydrofolate-binding residues include R23, E80, and K120. In terms of domain architecture, TrmE-type G spans 216–377 (GMKVVIAGRP…LRDHLKQSMG (162 aa)). N226 lines the K(+) pocket. Residues 226–231 (NAGKSS), 245–251 (TDIAGTT), 270–273 (DTAG), 335–338 (NKAD), and 358–360 (SAR) each bind GTP. Mg(2+) is bound at residue S230. Residues T245, I247, and T250 each contribute to the K(+) site. A Mg(2+)-binding site is contributed by T251. K454 contributes to the (6S)-5-formyl-5,6,7,8-tetrahydrofolate binding site.

This sequence belongs to the TRAFAC class TrmE-Era-EngA-EngB-Septin-like GTPase superfamily. TrmE GTPase family. As to quaternary structure, homodimer. Heterotetramer of two MnmE and two MnmG subunits. It depends on K(+) as a cofactor.

The protein localises to the cytoplasm. In terms of biological role, exhibits a very high intrinsic GTPase hydrolysis rate. Involved in the addition of a carboxymethylaminomethyl (cmnm) group at the wobble position (U34) of certain tRNAs, forming tRNA-cmnm(5)s(2)U34. This Yersinia pseudotuberculosis serotype IB (strain PB1/+) protein is tRNA modification GTPase MnmE.